The following is a 160-amino-acid chain: SsrA-binding protein (160 aa).

Belongs to the SmpB family.

It is found in the cytoplasm. Its function is as follows. Required for rescue of stalled ribosomes mediated by trans-translation. Binds to transfer-messenger RNA (tmRNA), required for stable association of tmRNA with ribosomes. tmRNA and SmpB together mimic tRNA shape, replacing the anticodon stem-loop with SmpB. tmRNA is encoded by the ssrA gene; the 2 termini fold to resemble tRNA(Ala) and it encodes a 'tag peptide', a short internal open reading frame. During trans-translation Ala-aminoacylated tmRNA acts like a tRNA, entering the A-site of stalled ribosomes, displacing the stalled mRNA. The ribosome then switches to translate the ORF on the tmRNA; the nascent peptide is terminated with the 'tag peptide' encoded by the tmRNA and targeted for degradation. The ribosome is freed to recommence translation, which seems to be the essential function of trans-translation. The chain is SsrA-binding protein from Pectobacterium carotovorum subsp. carotovorum (strain PC1).